Reading from the N-terminus, the 787-residue chain is Serine/threonine-protein kinase SCH9 (787 aa).

Disordered regions lie at residues 1 to 82, 132 to 172, and 238 to 280; these read MVDF…QSGT, PQQQ…GSSQ, and SPVS…LFGQ. Over residues 132–155 the composition is skewed to low complexity; it reads PQQQQQQQAQQPPPEQQQSSAPYQ. Composition is skewed to polar residues over residues 156-172 and 239-263; these read NSAN…GSSQ and PVSS…SNHG. Residues 182–354 enclose the C2 domain; it reads DKTGNKLSPA…KNNKNESEWL (173 aa). A Protein kinase domain is found at 392–653; the sequence is FHFLRLLGKG…ARELKAHPFF (262 aa). ATP contacts are provided by residues 398–406 and K421; that span reads LGKGTFGQV. D518 (proton acceptor) is an active-site residue. Residues 654-729 enclose the AGC-kinase C-terminal domain; it reads ADIDWDLLRA…VDDSTMDDHF (76 aa).

Belongs to the protein kinase superfamily. AGC Ser/Thr protein kinase family. cAMP subfamily.

The enzyme catalyses L-seryl-[protein] + ATP = O-phospho-L-seryl-[protein] + ADP + H(+). It catalyses the reaction L-threonyl-[protein] + ATP = O-phospho-L-threonyl-[protein] + ADP + H(+). Its function is as follows. Protein kinase that is part of growth control pathway which is at least partially redundant with the cAMP pathway. Plays a role in filamentous growth and virulence. Prevents hypha formation specifically under hypoxia at high CO(2) levels. Required for chlamydospore formation, distinctive morphological feature of the fungal pathogen C.albicans that can be induced to form in oxygen-limited environments and has been reported in clinical specimens. The polypeptide is Serine/threonine-protein kinase SCH9 (SCH9) (Candida albicans (strain SC5314 / ATCC MYA-2876) (Yeast)).